A 268-amino-acid polypeptide reads, in one-letter code: 4-diphosphocytidyl-2-C-methyl-D-erythritol kinase (268 aa).

Lys9 is a catalytic residue. 88–98 serves as a coordination point for ATP; that stretch reads PPGAGLGGGSS. Asp130 is a catalytic residue.

Belongs to the GHMP kinase family. IspE subfamily.

It carries out the reaction 4-CDP-2-C-methyl-D-erythritol + ATP = 4-CDP-2-C-methyl-D-erythritol 2-phosphate + ADP + H(+). The protein operates within isoprenoid biosynthesis; isopentenyl diphosphate biosynthesis via DXP pathway; isopentenyl diphosphate from 1-deoxy-D-xylulose 5-phosphate: step 3/6. Catalyzes the phosphorylation of the position 2 hydroxy group of 4-diphosphocytidyl-2C-methyl-D-erythritol. This chain is 4-diphosphocytidyl-2-C-methyl-D-erythritol kinase, found in Aquifex aeolicus (strain VF5).